The chain runs to 471 residues: Trigger factor (471 aa).

The PPIase FKBP-type domain occupies 162 to 243; the sequence is GDFVVMDLVA…VSQVQEQELP (82 aa). The tract at residues 436–471 is disordered; that stretch reads LRPDGTIGEPEDEIEAETEIEIEPAAETDTEADTEQ. Positions 444–471 are enriched in acidic residues; that stretch reads EPEDEIEAETEIEIEPAAETDTEADTEQ.

It belongs to the FKBP-type PPIase family. Tig subfamily.

It localises to the cytoplasm. It catalyses the reaction [protein]-peptidylproline (omega=180) = [protein]-peptidylproline (omega=0). Involved in protein export. Acts as a chaperone by maintaining the newly synthesized protein in an open conformation. Functions as a peptidyl-prolyl cis-trans isomerase. The polypeptide is Trigger factor (Nocardioides sp. (strain ATCC BAA-499 / JS614)).